Here is a 635-residue protein sequence, read N- to C-terminus: Probable potassium transport system protein Kup (635 aa).

The next 12 membrane-spanning stretches (helical) occupy residues 22–42, 59–79, 111–131, 148–168, 180–200, 216–236, 259–279, 297–317, 349–369, 378–398, 404–424, and 428–448; these read LVIG…LYTL, VLGI…LKYV, MYVV…DGVI, APKL…MLFL, AFGP…VYNM, VLFF…VVLA, WQFV…ALVL, ALYP…QALI, IYVP…VVGF, AYGV…VIYA, VPAP…CAFF, and IIKF…LFTL.

Belongs to the HAK/KUP transporter (TC 2.A.72) family.

It is found in the cell inner membrane. It carries out the reaction K(+)(in) + H(+)(in) = K(+)(out) + H(+)(out). Its function is as follows. Transport of potassium into the cell. Likely operates as a K(+):H(+) symporter. This Xanthomonas oryzae pv. oryzae (strain KACC10331 / KXO85) protein is Probable potassium transport system protein Kup.